The primary structure comprises 120 residues: MERHQHLLSEYQQILTLSEQMLMLATVENWDALVDLEMAYLKAVENTANITISSCSSPVLQELLRQKLRSILENEIEIKRLLQRRLDKLSELVGQSTRQQAVNRTYGQFPDQALLLGETQ.

Positions 1–50 (MERHQHLLSEYQQILTLSEQMLMLATVENWDALVDLEMAYLKAVENTANI) are required for homodimerization. Residues 60–98 (LQELLRQKLRSILENEIEIKRLLQRRLDKLSELVGQSTR) form a fliD binding region.

Belongs to the FliT family. Homodimer. Interacts with FliD and FlhC.

The protein localises to the cytoplasm. It localises to the cytosol. Its function is as follows. Dual-function protein that regulates the transcription of class 2 flagellar operons and that also acts as an export chaperone for the filament-capping protein FliD. As a transcriptional regulator, acts as an anti-FlhDC factor; it directly binds FlhC, thus inhibiting the binding of the FlhC/FlhD complex to class 2 promoters, resulting in decreased expression of class 2 flagellar operons. As a chaperone, effects FliD transition to the membrane by preventing its premature polymerization, and by directing it to the export apparatus. The protein is Flagellar protein FliT of Yersinia pseudotuberculosis serotype IB (strain PB1/+).